Here is a 256-residue protein sequence, read N- to C-terminus: Ribonuclease 3 (256 aa).

One can recognise an RNase III domain in the interval 3–125 (LEALQQRLGY…IFGAVFLDGG (123 aa)). Glu38 serves as a coordination point for Mg(2+). Asp42 is a catalytic residue. 2 residues coordinate Mg(2+): Asp111 and Glu114. The active site involves Glu114. The 71-residue stretch at 152-222 (DAKTLLQEYL…AKLALEEAHR (71 aa)) folds into the DRBM domain. The segment at 227 to 256 (LVKRSRAERTGKTRKQATPPDPQLSLRLKE) is disordered.

This sequence belongs to the ribonuclease III family. Homodimer. Mg(2+) serves as cofactor.

The protein resides in the cytoplasm. The enzyme catalyses Endonucleolytic cleavage to 5'-phosphomonoester.. Functionally, digests double-stranded RNA. Involved in the processing of primary rRNA transcript to yield the immediate precursors to the large and small rRNAs (23S and 16S). Processes some mRNAs, and tRNAs when they are encoded in the rRNA operon. Processes pre-crRNA and tracrRNA of type II CRISPR loci if present in the organism. This is Ribonuclease 3 from Ralstonia nicotianae (strain ATCC BAA-1114 / GMI1000) (Ralstonia solanacearum).